Consider the following 253-residue polypeptide: 5'-nucleotidase SurE (253 aa).

Positions 8, 9, 40, and 93 each coordinate a divalent metal cation.

The protein belongs to the SurE nucleotidase family. It depends on a divalent metal cation as a cofactor.

Its subcellular location is the cytoplasm. It carries out the reaction a ribonucleoside 5'-phosphate + H2O = a ribonucleoside + phosphate. In terms of biological role, nucleotidase that shows phosphatase activity on nucleoside 5'-monophosphates. The sequence is that of 5'-nucleotidase SurE from Methylobacterium sp. (strain 4-46).